The primary structure comprises 427 residues: Ribosomal protein uS12 methylthiotransferase RimO (427 aa).

In terms of domain architecture, MTTase N-terminal spans 1-116 (MNFYVEVLGC…IATHIGKRNV (116 aa)). [4Fe-4S] cluster-binding residues include Cys-10, Cys-46, Cys-79, Cys-145, Cys-149, and Cys-152. The Radical SAM core domain maps to 131 to 360 (VDNGQYAYVK…MDIQSQISFE (230 aa)). The TRAM domain maps to 363 to 426 (EKLVGKKLKV…IYDLEGEIVE (64 aa)).

This sequence belongs to the methylthiotransferase family. RimO subfamily. [4Fe-4S] cluster serves as cofactor.

Its subcellular location is the cytoplasm. The catalysed reaction is L-aspartate(89)-[ribosomal protein uS12]-hydrogen + (sulfur carrier)-SH + AH2 + 2 S-adenosyl-L-methionine = 3-methylsulfanyl-L-aspartate(89)-[ribosomal protein uS12]-hydrogen + (sulfur carrier)-H + 5'-deoxyadenosine + L-methionine + A + S-adenosyl-L-homocysteine + 2 H(+). In terms of biological role, catalyzes the methylthiolation of an aspartic acid residue of ribosomal protein uS12. This chain is Ribosomal protein uS12 methylthiotransferase RimO, found in Thermosipho melanesiensis (strain DSM 12029 / CIP 104789 / BI429).